The chain runs to 310 residues: Porphobilinogen deaminase (310 aa).

Residue C242 is modified to S-(dipyrrolylmethanemethyl)cysteine.

It belongs to the HMBS family. In terms of assembly, monomer. Dipyrromethane is required as a cofactor.

The enzyme catalyses 4 porphobilinogen + H2O = hydroxymethylbilane + 4 NH4(+). The protein operates within porphyrin-containing compound metabolism; protoporphyrin-IX biosynthesis; coproporphyrinogen-III from 5-aminolevulinate: step 2/4. Tetrapolymerization of the monopyrrole PBG into the hydroxymethylbilane pre-uroporphyrinogen in several discrete steps. The sequence is that of Porphobilinogen deaminase from Shewanella sp. (strain ANA-3).